Here is a 159-residue protein sequence, read N- to C-terminus: MKIKLVTVGKLKEKYLIQGINEYLKRLNSYAKMEIIEVPDEKAPEKLSDAEMLQVKEKEGQRILGKINDNEYVFVLAINGKQLSSEEFSKEIEQLGISGKSNLTFVIGGSLGLSDSVLQRSNQQISFGRLTYPHQLMRLVLVEQIYRGFRIMKGEPYHK.

S-adenosyl-L-methionine-binding positions include leucine 76, glycine 108, and 127–132; that span reads FGRLTY.

It belongs to the RNA methyltransferase RlmH family. In terms of assembly, homodimer.

The protein resides in the cytoplasm. The enzyme catalyses pseudouridine(1915) in 23S rRNA + S-adenosyl-L-methionine = N(3)-methylpseudouridine(1915) in 23S rRNA + S-adenosyl-L-homocysteine + H(+). In terms of biological role, specifically methylates the pseudouridine at position 1915 (m3Psi1915) in 23S rRNA. This chain is Ribosomal RNA large subunit methyltransferase H, found in Enterococcus faecalis (strain ATCC 700802 / V583).